We begin with the raw amino-acid sequence, 236 residues long: Small ribosomal subunit protein uS3 (236 aa).

A KH type-2 domain is found at isoleucine 39–arginine 107. Residues alanine 214–alanine 236 form a disordered region.

Belongs to the universal ribosomal protein uS3 family. In terms of assembly, part of the 30S ribosomal subunit. Forms a tight complex with proteins S10 and S14.

Binds the lower part of the 30S subunit head. Binds mRNA in the 70S ribosome, positioning it for translation. This chain is Small ribosomal subunit protein uS3, found in Brucella suis (strain ATCC 23445 / NCTC 10510).